Reading from the N-terminus, the 706-residue chain is Ribosomal RNA large subunit methyltransferase K/L (706 aa).

In terms of domain architecture, THUMP spans 43 to 154 (LMYQSLLWSR…RDMASVALDL (112 aa)).

It belongs to the methyltransferase superfamily. RlmKL family.

It localises to the cytoplasm. The catalysed reaction is guanosine(2445) in 23S rRNA + S-adenosyl-L-methionine = N(2)-methylguanosine(2445) in 23S rRNA + S-adenosyl-L-homocysteine + H(+). It carries out the reaction guanosine(2069) in 23S rRNA + S-adenosyl-L-methionine = N(2)-methylguanosine(2069) in 23S rRNA + S-adenosyl-L-homocysteine + H(+). Its function is as follows. Specifically methylates the guanine in position 2445 (m2G2445) and the guanine in position 2069 (m7G2069) of 23S rRNA. The polypeptide is Ribosomal RNA large subunit methyltransferase K/L (Yersinia pestis (strain Pestoides F)).